The sequence spans 157 residues: Transcription elongation factor GreA (157 aa).

Residues 47-75 adopt a coiled-coil conformation; it reads SGEYEDAKKAQALLEGRIRELKHLLSRAE.

This sequence belongs to the GreA/GreB family.

Functionally, necessary for efficient RNA polymerase transcription elongation past template-encoded arresting sites. The arresting sites in DNA have the property of trapping a certain fraction of elongating RNA polymerases that pass through, resulting in locked ternary complexes. Cleavage of the nascent transcript by cleavage factors such as GreA or GreB allows the resumption of elongation from the new 3'terminus. GreA releases sequences of 2 to 3 nucleotides. In Chloroflexus aurantiacus (strain ATCC 29366 / DSM 635 / J-10-fl), this protein is Transcription elongation factor GreA.